A 375-amino-acid chain; its full sequence is Chaperone protein DnaJ (375 aa).

In terms of domain architecture, J spans 5–70 (DYYEILGISK…EKRAAYDQYG (66 aa)). The CR-type zinc finger occupies 130–208 (GIIKEICIPT…CHGNGRVERS (79 aa)). Positions 143, 146, 160, 163, 182, 185, 196, and 199 each coordinate Zn(2+). CXXCXGXG motif repeat units follow at residues 143–150 (CEKCRGTG), 160–167 (CMTCHGQG), 182–189 (CPTCHGHG), and 196–203 (CNKCHGNG).

This sequence belongs to the DnaJ family. In terms of assembly, homodimer. Zn(2+) is required as a cofactor.

The protein localises to the cytoplasm. Its function is as follows. Participates actively in the response to hyperosmotic and heat shock by preventing the aggregation of stress-denatured proteins and by disaggregating proteins, also in an autonomous, DnaK-independent fashion. Unfolded proteins bind initially to DnaJ; upon interaction with the DnaJ-bound protein, DnaK hydrolyzes its bound ATP, resulting in the formation of a stable complex. GrpE releases ADP from DnaK; ATP binding to DnaK triggers the release of the substrate protein, thus completing the reaction cycle. Several rounds of ATP-dependent interactions between DnaJ, DnaK and GrpE are required for fully efficient folding. Also involved, together with DnaK and GrpE, in the DNA replication of plasmids through activation of initiation proteins. The polypeptide is Chaperone protein DnaJ (Blochmanniella pennsylvanica (strain BPEN)).